A 142-amino-acid chain; its full sequence is ER-derived vesicles protein ERV15 (142 aa).

The Cytoplasmic segment spans residues 1 to 7 (MSGTGLS). Residues 8-28 (LFVTGLILNCLNSICQIYFTI) form a helical membrane-spanning segment. The Extracellular portion of the chain corresponds to 29–55 (LYGDLEADYINSIELCKRVNRLSVPEA). Residues 56 to 76 (ILQAFISALFLFNGYWFVFLL) form a helical membrane-spanning segment. Residues 77-114 (NVPVLAYNASKVYKKTHLLDATDIFRKLGRCKIECFLK) lie on the Cytoplasmic side of the membrane. The helical transmembrane segment at 115–135 (LGFYLLIFFFYFYRMVTALLE) threads the bilayer. Residues 136–142 (NDANLIS) lie on the Extracellular side of the membrane.

The protein belongs to the cornichon family.

It is found in the membrane. The chain is ER-derived vesicles protein ERV15 (ERV15) from Saccharomyces cerevisiae (strain ATCC 204508 / S288c) (Baker's yeast).